Consider the following 439-residue polypeptide: Xylose isomerase (439 aa).

Residues His-101 and Asp-104 contribute to the active site. Glu-232, Glu-268, His-271, Asp-296, Asp-307, Asp-309, and Asp-339 together coordinate Mg(2+).

Belongs to the xylose isomerase family. In terms of assembly, homotetramer. The cofactor is Mg(2+).

The protein resides in the cytoplasm. It carries out the reaction alpha-D-xylose = alpha-D-xylulofuranose. This chain is Xylose isomerase, found in Yersinia pseudotuberculosis serotype O:1b (strain IP 31758).